The primary structure comprises 441 residues: tRNA-2-methylthio-N(6)-dimethylallyladenosine synthase (441 aa).

The 117-residue stretch at 5–121 folds into the MTTase N-terminal domain; sequence KKLFIKTYGC…LPQMEARLRE (117 aa). Residues cysteine 14, cysteine 50, cysteine 84, cysteine 159, cysteine 163, and cysteine 166 each coordinate [4Fe-4S] cluster. The Radical SAM core domain occupies 145–380; it reads ARRAPSAFLT…TRQQQDIQQS (236 aa). Residues 379-441 enclose the TRAM domain; sequence QSMVGRDVSV…RNSLAAVTLA (63 aa).

Belongs to the methylthiotransferase family. MiaB subfamily. As to quaternary structure, monomer. The cofactor is [4Fe-4S] cluster.

The protein resides in the cytoplasm. It catalyses the reaction N(6)-dimethylallyladenosine(37) in tRNA + (sulfur carrier)-SH + AH2 + 2 S-adenosyl-L-methionine = 2-methylsulfanyl-N(6)-dimethylallyladenosine(37) in tRNA + (sulfur carrier)-H + 5'-deoxyadenosine + L-methionine + A + S-adenosyl-L-homocysteine + 2 H(+). In terms of biological role, catalyzes the methylthiolation of N6-(dimethylallyl)adenosine (i(6)A), leading to the formation of 2-methylthio-N6-(dimethylallyl)adenosine (ms(2)i(6)A) at position 37 in tRNAs that read codons beginning with uridine. The sequence is that of tRNA-2-methylthio-N(6)-dimethylallyladenosine synthase from Roseobacter denitrificans (strain ATCC 33942 / OCh 114) (Erythrobacter sp. (strain OCh 114)).